Here is a 781-residue protein sequence, read N- to C-terminus: MKTVLPSVPETVRLSRRGFLVQAGTITCSVAFGSVPAAAGDTAESTPSIAAVSPNVWVRVHADGIVDIVCPAVELGQGAHTALPRFVAEELDADWDRVRVQQAGASDKVYGNPLAWGTQFTAASRTTVGYFDVLRVAGAQARFVLVQTAARRWSVPADQLETQKGVVLHRRSRRSATYGELVASVQVPESFPHFFARNEATQPADDYFGAAPPSVVAQAAGPASGAIALKHRSTYRLIGKDAPRKDIPPKVNGQACYGMDVQVPGMLYAMVETGPVAGMAPERVDDGAARQVPGIHHVLSLPHGVAVVGRDIFAVRAARARLLVNWKANPDKQSYDSGQVLDEFSDLCRNGIERNAVQAWKQGELSSIDAVFARPDVRIESFEMQSDLVYQAPMEPQSAVIQPHADGSAEAWVGTQWPTVEQGFAAGILGIAPDKLTMHLPLVGGGFGRRLEPGALVDAAHIVRAIGKTVKVIWSREDDLKRNPFRQALACRVEAAVLEKDQRILALRHTVAADSWLARLFPQYFNAYQQTDPGNWIGGMVAYDVPLQRIDALTPRRSVDVCYMRGIGVAQVKFAQESLVDQIARRLNADPVDFRLAHLNTSPRGAAVVRTVAEMSDWKRRSADAGGGMALGLAYTPYSNAHVALVSEVHFNRSENTLSVSRVWCAVDVGMVAQPDIVKAQMEGGIIQGLSVALMERVQVAKGVLQHSNFHDYPMLRMSQVPQIHVRLVETDQAMAGVAELGLLQIGPAINNAFARITGQHLRSLPMRPALAQMKRSGPTA.

As to quaternary structure, heterodimer of an alpha chain and a beta chain.

The enzyme catalyses isoquinoline + A + H2O = isoquinolin-1(2H)-one + AH2. Specific towards N-containing N-heterocyclic substrates, including isoquinoline, isoquinolin-5-ol, phthalazine and quinazoline. This Brevundimonas diminuta (Pseudomonas diminuta) protein is Isoquinoline 1-oxidoreductase subunit beta (iorB).